The following is a 330-amino-acid chain: 5-dehydro-2-deoxygluconokinase (330 aa).

This sequence belongs to the carbohydrate kinase PfkB family.

It catalyses the reaction 5-dehydro-2-deoxy-D-gluconate + ATP = 6-phospho-5-dehydro-2-deoxy-D-gluconate + ADP + H(+). It participates in polyol metabolism; myo-inositol degradation into acetyl-CoA; acetyl-CoA from myo-inositol: step 5/7. In terms of biological role, catalyzes the phosphorylation of 5-dehydro-2-deoxy-D-gluconate (2-deoxy-5-keto-D-gluconate or DKG) to 6-phospho-5-dehydro-2-deoxy-D-gluconate (DKGP). In Bacillus velezensis (strain DSM 23117 / BGSC 10A6 / LMG 26770 / FZB42) (Bacillus amyloliquefaciens subsp. plantarum), this protein is 5-dehydro-2-deoxygluconokinase.